Reading from the N-terminus, the 218-residue chain is MRTRVKICGLTREQDIASAVQAGADAIGFVFYPASKRHVDPARAAQLRREVPAFVDVVALFVNPRPDEVQAVLDHVAPDLLQFHGDETPQDCGRYGRRYLRAFRAGAPGLDSAAGLAAACRQYADAAGWLFDSYSAGYGGSGQGFDHGLLAGVQADPASCAIVLAGGLHPGNVADAVRAVRPWAVDVSSGVEDAPGIKSAGKIRQLMAAIKSVDQVAR.

The protein belongs to the TrpF family.

The enzyme catalyses N-(5-phospho-beta-D-ribosyl)anthranilate = 1-(2-carboxyphenylamino)-1-deoxy-D-ribulose 5-phosphate. The protein operates within amino-acid biosynthesis; L-tryptophan biosynthesis; L-tryptophan from chorismate: step 3/5. The protein is N-(5'-phosphoribosyl)anthranilate isomerase of Bordetella pertussis (strain Tohama I / ATCC BAA-589 / NCTC 13251).